The sequence spans 142 residues: Large ribosomal subunit protein uL13 (142 aa).

Belongs to the universal ribosomal protein uL13 family. As to quaternary structure, part of the 50S ribosomal subunit.

This protein is one of the early assembly proteins of the 50S ribosomal subunit, although it is not seen to bind rRNA by itself. It is important during the early stages of 50S assembly. In Shewanella baltica (strain OS223), this protein is Large ribosomal subunit protein uL13.